Reading from the N-terminus, the 198-residue chain is Recombination protein RecR (198 aa).

Residues 57–72 (CSECGHITEQDPCYIC) form a C4-type zinc finger. Positions 80–175 (SVICVVEDDK…TVTRLAQGLS (96 aa)) constitute a Toprim domain.

It belongs to the RecR family.

In terms of biological role, may play a role in DNA repair. It seems to be involved in an RecBC-independent recombinational process of DNA repair. It may act with RecF and RecO. The sequence is that of Recombination protein RecR from Staphylococcus saprophyticus subsp. saprophyticus (strain ATCC 15305 / DSM 20229 / NCIMB 8711 / NCTC 7292 / S-41).